The primary structure comprises 169 residues: NADH-quinone oxidoreductase subunit I (169 aa).

4Fe-4S ferredoxin-type domains follow at residues 61 to 90 (RKYK…IEAQ) and 100 to 129 (VRYD…EGPN). Residues Cys70, Cys73, Cys76, Cys80, Cys109, Cys112, Cys115, and Cys119 each contribute to the [4Fe-4S] cluster site.

The protein belongs to the complex I 23 kDa subunit family. As to quaternary structure, NDH-1 is composed of 14 different subunits. Subunits NuoA, H, J, K, L, M, N constitute the membrane sector of the complex. Requires [4Fe-4S] cluster as cofactor.

Its subcellular location is the cell inner membrane. It carries out the reaction a quinone + NADH + 5 H(+)(in) = a quinol + NAD(+) + 4 H(+)(out). Functionally, NDH-1 shuttles electrons from NADH, via FMN and iron-sulfur (Fe-S) centers, to quinones in the respiratory chain. The immediate electron acceptor for the enzyme in this species is believed to be ubiquinone. Couples the redox reaction to proton translocation (for every two electrons transferred, four hydrogen ions are translocated across the cytoplasmic membrane), and thus conserves the redox energy in a proton gradient. The polypeptide is NADH-quinone oxidoreductase subunit I (Ehrlichia chaffeensis (strain ATCC CRL-10679 / Arkansas)).